The sequence spans 914 residues: Beta-mannosidase A (914 aa).

The N-terminal stretch at 1 to 20 is a signal peptide; sequence MRFTATAAALVASSIPATLG. Residues N39, N79, N230, N265, N299, N309, and N330 are each glycosylated (N-linked (GlcNAc...) asparagine). E462 (proton donor) is an active-site residue. N-linked (GlcNAc...) asparagine glycosylation is found at N591, N614, N641, N721, N744, N773, N784, and N909.

The protein belongs to the glycosyl hydrolase 2 family. Beta-mannosidase A subfamily. In terms of assembly, homodimer.

The protein localises to the secreted. The catalysed reaction is Hydrolysis of terminal, non-reducing beta-D-mannose residues in beta-D-mannosides.. Its pathway is glycan metabolism; N-glycan degradation. In terms of biological role, exoglycosidase that cleaves the single beta-linked mannose residue from the non-reducing end of beta-mannosidic oligosaccharides of various complexity and length. Involved in the degradation of polymeric mannan and galactomannan. The chain is Beta-mannosidase A (mndA) from Aspergillus flavus (strain ATCC 200026 / FGSC A1120 / IAM 13836 / NRRL 3357 / JCM 12722 / SRRC 167).